Reading from the N-terminus, the 199-residue chain is MIKVKICGLKRDEDIKCVNRYKPDYVGFVFSKSKRQVNLEQAKMLIANLDSSIKSVGVFVDEALEYVYNTSKILALDVIQFHGLEDEEYMRHFNEFTIWKALKVRCREDILNLNYKYADGIVLDNKTAGSGKCFDWDIARHIKIKKDLILAGGINEENVETAAYIVNPDIVDVSSGVESQGYKDSSKIKMFIEKVRNIK.

It belongs to the TrpF family.

The enzyme catalyses N-(5-phospho-beta-D-ribosyl)anthranilate = 1-(2-carboxyphenylamino)-1-deoxy-D-ribulose 5-phosphate. The protein operates within amino-acid biosynthesis; L-tryptophan biosynthesis; L-tryptophan from chorismate: step 3/5. This is N-(5'-phosphoribosyl)anthranilate isomerase from Clostridium kluyveri (strain NBRC 12016).